The primary structure comprises 97 residues: Coiled-coil domain-containing protein 167 (97 aa).

Positions 2 to 78 form a coiled coil; sequence TKKKRENLGV…LLRHENRKNT (77 aa). Residues 78–95 form a helical membrane-spanning segment; that stretch reads TLLSVAIFTVFALLYAYW.

It is found in the membrane. The polypeptide is Coiled-coil domain-containing protein 167 (Ccdc167) (Mus musculus (Mouse)).